The chain runs to 415 residues: Amino acid decarboxylase lolD2 (415 aa).

The residue at position 62 (Lys62) is an N6-(pyridoxal phosphate)lysine. Residues Ser194, Gly231, and 266 to 269 (EPGT) contribute to the pyridoxal 5'-phosphate site. A substrate-binding site is contributed by 315-316 (IV). The active-site Proton donor; shared with dimeric partner is the Cys351. Cys351 is subject to S-nitrosocysteine. Residue Asp352 coordinates substrate. Position 381 (Tyr381) interacts with pyridoxal 5'-phosphate.

It belongs to the Orn/Lys/Arg decarboxylase class-II family. Homodimer. Pyridoxal 5'-phosphate is required as a cofactor.

The protein operates within alkaloid biosynthesis. Amino acid decarboxylase; part of the gene cluster that mediates the biosynthesis of loline alkaloids, potent insecticidal agents composed of a pyrrolizidine ring system and an uncommon ether bridge linking carbons 2 and 7. Lolines are structurally differentiated by the various modifications of the L-amino group and include norloline, loline, N-methylloline, N-acetylloline, N-acetylnorloline, and N-formylloline. The first committed step is the condensation of O-acetyl-L-homoserine (derived from L-aspartic acid) and L-proline, probably catalyzed by the gamma-type pyridoxal 5'-phosphate(PLP)-dependent enzyme lolC, to give the diamino diacid, NACPP. Ensuing cyclization, decarboxylation, and acetylation steps yield 1-exo-acetamidopyrrolizidine (AcAP). LolO is required for installation of the ether bridge upon the pathway intermediate, 1-exo-acetamidopyrrolizidine (AcAP). In sequential 2-oxoglutarate- and O(2)-consuming steps, lolO removes hydrogens from C2 and C7 of AcAP to form both carbon-oxygen bonds in N-acetylnorloline (NANL), the precursor to all other lolines. The enzymes lolD, lolE, lolF and lolT have also been proposed to be involved in the ether-bridge installation. Further processing of the exocyclic moiety of NANL by fungal N-acetamidase (LolN), methyltransferase (LolM), and cytochrome P450 (LolP) enzymes, with occasional involvement of a plant acetyltransferase, generates the other known lolines. LolN transforms NANL to norlonine which is monomethylated and dimethylated to respectively lonine and N-methyllonine (NML) by lolM. LolP catalyzes hydroxylation of the methyl group in N-methylloline (NML) and further oxygenation to N-formylloline (NFL). A plant acetyltransferase is responsible for the acetylation of loline to form N-acetylloline (NAL). LolA might interact with aspartate kinase to prevent feedback inhibition of its activity by these end products and thereby promote production of L-homoserine from L-aspartate. In Epichloe uncinata (Endophyte fungus), this protein is Amino acid decarboxylase lolD2.